Reading from the N-terminus, the 98-residue chain is Cystatin-B (98 aa).

The residue at position 1 (M1) is an N-acetylmethionine. The Secondary area of contact signature appears at 46–50 (QIVAG).

This sequence belongs to the cystatin family. Widely expressed. Highest expression in heart, liver and kidney. Lower levels in brain, lung and skeletal muscle. Lowest levels in spleen and testis.

The protein resides in the cytoplasm. Functionally, this is an intracellular thiol proteinase inhibitor. This chain is Cystatin-B (Cstb), found in Mus musculus (Mouse).